The chain runs to 232 residues: RNA chaperone ProQ (232 aa).

The segment at 105–182 is disordered; it reads EAKARVQAQR…REEQHTPVSD (78 aa). Residues 117–136 are compositionally biased toward basic and acidic residues; sequence QQAKKREAAAAAGEKEDAPR. Residues 137–146 are compositionally biased toward basic residues; it reads RERKPRPTTP. Positions 147 to 177 are enriched in basic and acidic residues; that stretch reads RRKEGAERKPRAQKSVEKAPKTVKAPREEQH.

The protein belongs to the ProQ family.

The protein resides in the cytoplasm. RNA chaperone with significant RNA binding, RNA strand exchange and RNA duplexing activities. May regulate ProP activity through an RNA-based, post-transcriptional mechanism. The polypeptide is RNA chaperone ProQ (Escherichia coli O7:K1 (strain IAI39 / ExPEC)).